The chain runs to 577 residues: Phosphatidylinositol/phosphatidylcholine transfer protein SFH14 (577 aa).

Residues 1–22 (MSGREQTGEKLSDSEYIEEEPR) form a disordered region. Positions 136–311 (ELDEVTRHYP…FLGGLCKCPN (176 aa)) constitute a CRAL-TRIO domain. Residues 364–383 (ETLKEEPEPEEYYSSTGSRS) are disordered. Residues 523-550 (EANEKLLAESLERIKSLELDLDKTKSVL) are a coiled coil.

Belongs to the SFH family.

Its subcellular location is the golgi apparatus membrane. It is found in the cell membrane. Its function is as follows. Required for transport of secretory proteins from the Golgi complex. Catalyzes the transfer of phosphatidylinositol and phosphatidylcholine between membranes in vitro. In Arabidopsis thaliana (Mouse-ear cress), this protein is Phosphatidylinositol/phosphatidylcholine transfer protein SFH14 (SFH14).